A 509-amino-acid chain; its full sequence is Probable cytochrome P450 4ac1 (509 aa).

Residues E317 and C454 each coordinate heme.

Belongs to the cytochrome P450 family. The cofactor is heme.

The protein localises to the endoplasmic reticulum membrane. It is found in the microsome membrane. Functionally, may be involved in the metabolism of insect hormones and in the breakdown of synthetic insecticides. The protein is Probable cytochrome P450 4ac1 (Cyp4ac1) of Drosophila melanogaster (Fruit fly).